The primary structure comprises 171 residues: RNA pyrophosphohydrolase (171 aa).

In terms of domain architecture, Nudix hydrolase spans 6–149 (GFRPNVGIIL…KREVYRRALK (144 aa)). Residues 39-60 (GGIKESESAEQALYRELQEEVG) carry the Nudix box motif.

It belongs to the Nudix hydrolase family. RppH subfamily. A divalent metal cation serves as cofactor.

Functionally, accelerates the degradation of transcripts by removing pyrophosphate from the 5'-end of triphosphorylated RNA, leading to a more labile monophosphorylated state that can stimulate subsequent ribonuclease cleavage. In Teredinibacter turnerae (strain ATCC 39867 / T7901), this protein is RNA pyrophosphohydrolase.